The following is a 316-amino-acid chain: Cytochrome c biogenesis protein CcsA (316 aa).

Helical transmembrane passes span phenylalanine 15–leucine 35, glycine 44–glycine 64, leucine 71–leucine 91, methionine 142–isoleucine 162, valine 220–asparagine 240, tryptophan 247–leucine 267, and alanine 281–leucine 301.

It belongs to the CcmF/CycK/Ccl1/NrfE/CcsA family. In terms of assembly, may interact with Ccs1.

It localises to the plastid. The protein resides in the chloroplast thylakoid membrane. Required during biogenesis of c-type cytochromes (cytochrome c6 and cytochrome f) at the step of heme attachment. The protein is Cytochrome c biogenesis protein CcsA of Trachelium caeruleum (Blue throatwort).